We begin with the raw amino-acid sequence, 187 residues long: ATP-dependent protease subunit HslV (187 aa).

Residue threonine 13 is part of the active site. Residues alanine 172, cysteine 175, and threonine 178 each contribute to the Na(+) site.

This sequence belongs to the peptidase T1B family. HslV subfamily. A double ring-shaped homohexamer of HslV is capped on each side by a ring-shaped HslU homohexamer. The assembly of the HslU/HslV complex is dependent on binding of ATP.

Its subcellular location is the cytoplasm. The enzyme catalyses ATP-dependent cleavage of peptide bonds with broad specificity.. With respect to regulation, allosterically activated by HslU binding. Functionally, protease subunit of a proteasome-like degradation complex believed to be a general protein degrading machinery. In Caulobacter sp. (strain K31), this protein is ATP-dependent protease subunit HslV.